The primary structure comprises 245 residues: Derlin-1 (245 aa).

Residues 1–5 (MDLEN) lie on the Cytoplasmic side of the membrane. A helical membrane pass occupies residues 6-26 (FLLGIPIVTRYWFLASTIIPL). The Lumenal segment spans residues 27–57 (LGRFGFINVQWMFLQWDLVVNKFQFWRPLTA). A helical membrane pass occupies residues 58-78 (LIYYPVTPQTGFHWLMMCYFL). The Cytoplasmic segment spans residues 79–100 (YNYSKALESETYRGRSADYLFM). The chain crosses the membrane as a helical span at residues 101 to 121 (LIFNWFFCSGLCMALDIYFLL). The Lumenal portion of the chain corresponds to 122–166 (EPMVISVLYVWCQVNKDTIVSFWFGMRFPARYLPWVLWGFNAVLR). A helical membrane pass occupies residues 167–187 (GGGTNELVGILVGHAYFFVAL). The Cytoplasmic portion of the chain corresponds to 188 to 245 (KYPDEYGVDLISTPEFLHRLIPDEDGGIHGQDGNIRGARQQPRGHQWPGGVGARLGGN). The tract at residues 218-245 (QDGNIRGARQQPRGHQWPGGVGARLGGN) is disordered. The segment covering 234 to 245 (WPGGVGARLGGN) has biased composition (gly residues).

Belongs to the derlin family.

The protein localises to the endoplasmic reticulum membrane. Functionally, specifically required for the degradation process of misfolded endoplasmic reticulum (ER) luminal proteins. Participates in the transfer of misfolded proteins from the ER to the cytosol, where they are destroyed by the proteasome in a ubiquitin-dependent manner. The sequence is that of Derlin-1 from Caenorhabditis elegans.